The sequence spans 543 residues: MSMFCYQCQETAMGTGCTLKGVCGKTSEVANLQDLLLFVVRGIAVYNEHLRREGHPSEEADKFIYDALFITITNANFDKAAIIRKIKEGLQLKNELASKVTIANAPDECLWDGNEDEFEEKARTVGVLRTPDEDIRSLKELVHYGLKGMAAYVEHAHNLGYQSPEIFAFMQSALAELTRNDITMEELVQLTLATGKHGVSAMAQLDAANTNSYGNPEISEVNLGVRNNPGILISGHDLKDLEELLEQTEGTGIDIYTHSEMLPAHYYPQLKKYKHLAGNYGNAWWKQKEEFESFNGPILFTSNCIVPPRANASYKDRIYITGACGLEGAHYIPERKDGKPKDFSALIAHAKQCQPPTAIESGTLIGGFAHAQVVALADKVVEAVKSGAIRKFFVMAGCDGRMKSREYYTEFAEKLPKDTVILTAGCAKYRYNKLALGDINGIPRVLDAGQCNDSYSLAVIALKLKEVFGLDDVNKLPIVYNIAWYEQKAVIVLLALLALGVKNIHLGPTLPAFLSPNVKNVLIEQFGIGGISTADEDIMKFLS.

[4Fe-4S] cluster-binding residues include Cys-5, Cys-8, Cys-17, and Cys-23. Hybrid [4Fe-2O-2S] cluster contacts are provided by His-236, Glu-260, Cys-304, Cys-398, Cys-426, Cys-451, Glu-486, and Lys-488. Cys-398 is modified (cysteine persulfide).

The protein belongs to the HCP family. [4Fe-4S] cluster is required as a cofactor. Hybrid [4Fe-2O-2S] cluster serves as cofactor.

The protein localises to the cytoplasm. The catalysed reaction is A + NH4(+) + H2O = hydroxylamine + AH2 + H(+). Its function is as follows. Catalyzes the reduction of hydroxylamine to form NH(3) and H(2)O. The sequence is that of Hydroxylamine reductase from Bacteroides thetaiotaomicron (strain ATCC 29148 / DSM 2079 / JCM 5827 / CCUG 10774 / NCTC 10582 / VPI-5482 / E50).